The chain runs to 142 residues: Large ribosomal subunit protein uL11 (142 aa).

Belongs to the universal ribosomal protein uL11 family. As to quaternary structure, part of the ribosomal stalk of the 50S ribosomal subunit. Interacts with L10 and the large rRNA to form the base of the stalk. L10 forms an elongated spine to which L12 dimers bind in a sequential fashion forming a multimeric L10(L12)X complex. In terms of processing, one or more lysine residues are methylated.

Its function is as follows. Forms part of the ribosomal stalk which helps the ribosome interact with GTP-bound translation factors. This chain is Large ribosomal subunit protein uL11, found in Aeromonas hydrophila subsp. hydrophila (strain ATCC 7966 / DSM 30187 / BCRC 13018 / CCUG 14551 / JCM 1027 / KCTC 2358 / NCIMB 9240 / NCTC 8049).